The chain runs to 594 residues: Beta-mannosyltransferase 3 (594 aa).

Topologically, residues 1 to 6 are cytoplasmic; it reads MRIRSN. Residues 7–27 traverse the membrane as a helical segment; it reads VLLLSTAGALALVWFAVVFSW. Topologically, residues 28 to 594 are extracellular; it reads DDKSIFGIPT…KDEVKDTKAK (567 aa). N-linked (GlcNAc...) asparagine glycosylation occurs at asparagine 305. Residues 512 to 594 are a coiled coil; it reads VTRGEEDRLK…KDEVKDTKAK (83 aa). Over residues 517–558 the composition is skewed to basic and acidic residues; sequence EDRLKNKEKERKIEEKRKKEEERKKKEEEKKKKEEEEKKKKE. The interval 517 to 564 is disordered; the sequence is EDRLKNKEKERKIEEKRKKEEERKKKEEEKKKKEEEEKKKKEEEEEEE.

The protein belongs to the BMT family.

It is found in the membrane. Its function is as follows. Beta-mannosyltransferase involved in cell wall biosynthesis. This Komagataella phaffii (strain ATCC 76273 / CBS 7435 / CECT 11047 / NRRL Y-11430 / Wegner 21-1) (Yeast) protein is Beta-mannosyltransferase 3 (BMT3).